We begin with the raw amino-acid sequence, 136 residues long: Large ribosomal subunit protein uL16 (136 aa).

The protein belongs to the universal ribosomal protein uL16 family. Part of the 50S ribosomal subunit.

Its function is as follows. Binds 23S rRNA and is also seen to make contacts with the A and possibly P site tRNAs. The polypeptide is Large ribosomal subunit protein uL16 (Shigella flexneri).